Consider the following 367-residue polypeptide: GMP synthase [glutamine-hydrolyzing] subunit B (367 aa).

The GMPS ATP-PPase domain occupies 2–190 (FDPASFVEEI…LKLPKEISER (189 aa)). Position 29–35 (29–35 (SGGVDST)) interacts with ATP.

As to quaternary structure, heterodimer composed of a glutamine amidotransferase subunit (A) and a GMP-binding subunit (B).

It catalyses the reaction XMP + L-glutamine + ATP + H2O = GMP + L-glutamate + AMP + diphosphate + 2 H(+). The protein operates within purine metabolism; GMP biosynthesis; GMP from XMP (L-Gln route): step 1/1. Its function is as follows. Catalyzes the synthesis of GMP from XMP. This is GMP synthase [glutamine-hydrolyzing] subunit B (guaAB) from Saccharolobus solfataricus (strain ATCC 35092 / DSM 1617 / JCM 11322 / P2) (Sulfolobus solfataricus).